The chain runs to 546 residues: CTP synthase (546 aa).

The tract at residues 1-266 is amidoligase domain; it reads MTTNYIFVTG…DDLVCQRFGI (266 aa). S14 serves as a coordination point for CTP. S14 contacts UTP. Residues 15-20 and D72 contribute to the ATP site; that span reads SLGKGI. 2 residues coordinate Mg(2+): D72 and E140. Residues 147–149, 187–192, and K223 contribute to the CTP site; these read DIE and KTKPTQ. UTP contacts are provided by residues 187 to 192 and K223; that span reads KTKPTQ. ATP is bound at residue 239–241; the sequence is KDV. The 252-residue stretch at 291-542 folds into the Glutamine amidotransferase type-1 domain; sequence TIGMVGKYIE…VKAAGENARG (252 aa). An L-glutamine-binding site is contributed by G352. Catalysis depends on C379, which acts as the Nucleophile; for glutamine hydrolysis. L-glutamine-binding positions include 380–383, E403, and R470; that span reads LGMQ. Catalysis depends on residues H515 and E517.

The protein belongs to the CTP synthase family. Homotetramer.

The catalysed reaction is UTP + L-glutamine + ATP + H2O = CTP + L-glutamate + ADP + phosphate + 2 H(+). It carries out the reaction L-glutamine + H2O = L-glutamate + NH4(+). It catalyses the reaction UTP + NH4(+) + ATP = CTP + ADP + phosphate + 2 H(+). It participates in pyrimidine metabolism; CTP biosynthesis via de novo pathway; CTP from UDP: step 2/2. Its activity is regulated as follows. Allosterically activated by GTP, when glutamine is the substrate; GTP has no effect on the reaction when ammonia is the substrate. The allosteric effector GTP functions by stabilizing the protein conformation that binds the tetrahedral intermediate(s) formed during glutamine hydrolysis. Inhibited by the product CTP, via allosteric rather than competitive inhibition. Catalyzes the ATP-dependent amination of UTP to CTP with either L-glutamine or ammonia as the source of nitrogen. Regulates intracellular CTP levels through interactions with the four ribonucleotide triphosphates. This is CTP synthase from Aliivibrio salmonicida (strain LFI1238) (Vibrio salmonicida (strain LFI1238)).